A 1002-amino-acid polypeptide reads, in one-letter code: Chitin synthase II (1002 aa).

2 disordered regions span residues 1-165 (MDRP…GRTS) and 178-209 (LDGS…SGSQ). Low complexity predominate over residues 63 to 78 (SYQPSVVSSHSRSASV). Residue asparagine 123 is glycosylated (N-linked (GlcNAc...) asparagine). A glycan (N-linked (GlcNAc...) asparagine) is linked at asparagine 336. The next 8 membrane-spanning stretches (helical) occupy residues 627 to 647 (WLNG…QILA), 669 to 689 (LLFT…VAGG), 704 to 724 (SVIF…QFIL), 740 to 760 (SMII…YIVV), 780 to 800 (LIVS…LYLE), 808 to 828 (SLQY…YAFC), 906 to 926 (YMVV…SEIY), and 940 to 960 (ILWA…TFAI).

Belongs to the chitin synthase family. Class II subfamily. In terms of tissue distribution, expressed in hyphal bodies.

The protein localises to the cell membrane. The enzyme catalyses [(1-&gt;4)-N-acetyl-beta-D-glucosaminyl](n) + UDP-N-acetyl-alpha-D-glucosamine = [(1-&gt;4)-N-acetyl-beta-D-glucosaminyl](n+1) + UDP + H(+). Its function is as follows. Polymerizes chitin, a structural polymer of the cell wall and septum, by transferring the sugar moiety of UDP-GlcNAc to the non-reducing end of the growing chitin polymer. Contributes to the production of conidia and the ability of fungal conidia to germinate. Involved in fungal stress tolerances. This is Chitin synthase II from Metarhizium acridum (strain CQMa 102).